The primary structure comprises 192 residues: Peptidyl-tRNA hydrolase (192 aa).

Tyr-14 contacts tRNA. His-19 serves as the catalytic Proton acceptor. TRNA is bound by residues Tyr-64, Asn-66, and Asn-112.

This sequence belongs to the PTH family. Monomer.

The protein localises to the cytoplasm. The enzyme catalyses an N-acyl-L-alpha-aminoacyl-tRNA + H2O = an N-acyl-L-amino acid + a tRNA + H(+). Functionally, hydrolyzes ribosome-free peptidyl-tRNAs (with 1 or more amino acids incorporated), which drop off the ribosome during protein synthesis, or as a result of ribosome stalling. In terms of biological role, catalyzes the release of premature peptidyl moieties from peptidyl-tRNA molecules trapped in stalled 50S ribosomal subunits, and thus maintains levels of free tRNAs and 50S ribosomes. The polypeptide is Peptidyl-tRNA hydrolase (Prosthecochloris aestuarii (strain DSM 271 / SK 413)).